Consider the following 347-residue polypeptide: 4-hydroxy-2-oxovalerate aldolase 1 (347 aa).

The 253-residue stretch at 11-263 (VVLHDMCLRD…ETGVDLFKLM (253 aa)) folds into the Pyruvate carboxyltransferase domain. 19–20 (RD) lines the substrate pocket. Mn(2+) is bound at residue Asp-20. Catalysis depends on His-23, which acts as the Proton acceptor. Residues Ser-173 and His-202 each coordinate substrate. His-202 and His-204 together coordinate Mn(2+). Tyr-293 contacts substrate.

It belongs to the 4-hydroxy-2-oxovalerate aldolase family.

The catalysed reaction is (S)-4-hydroxy-2-oxopentanoate = acetaldehyde + pyruvate. The chain is 4-hydroxy-2-oxovalerate aldolase 1 (lapG) from Azoarcus sp. (strain BH72).